Here is a 276-residue protein sequence, read N- to C-terminus: Probable endonuclease 4 (276 aa).

The Zn(2+) site is built by H70, H108, E143, D176, H179, H210, D223, H225, and E255.

The protein belongs to the AP endonuclease 2 family. It depends on Zn(2+) as a cofactor.

It catalyses the reaction Endonucleolytic cleavage to 5'-phosphooligonucleotide end-products.. Its function is as follows. Endonuclease IV plays a role in DNA repair. It cleaves phosphodiester bonds at apurinic or apyrimidinic (AP) sites, generating a 3'-hydroxyl group and a 5'-terminal sugar phosphate. The chain is Probable endonuclease 4 from Mesomycoplasma hyopneumoniae (strain 7448) (Mycoplasma hyopneumoniae).